We begin with the raw amino-acid sequence, 181 residues long: Salmonella anti-inflammatory response activator (181 aa).

Residues 4–24 (FVYIYILVIYGSYLWFSLGGN) form a helical membrane-spanning segment.

As to quaternary structure, interacts with host (human) STAT3.

The protein localises to the membrane. The protein resides in the host cytoplasm. In terms of biological role, a Salmonella strain-specific effector that induces a host STAT3-dependent anti-inflammatory pathway. In bacteria-infected host cells (human) leads to phosphorylation of host STAT3, at least on 'Tyr-705' and interleukin-10 (IL-10, IL10) production; expressing the gene alone in host cells induces STAT3 phosphorylation and IL-10 production. IL-10 production requires STAT3 in infected cells. Contributes to virulence in mouse infection models. Encoded in only a few S.typhimurium serovars, it may be a specific effector for adaptation to bovine hosts. The chain is Salmonella anti-inflammatory response activator from Salmonella typhimurium (strain 14028s / SGSC 2262).